Reading from the N-terminus, the 365-residue chain is c-di-GMP synthase (365 aa).

The protein belongs to the CD-NTase family. E subfamily.

It catalyses the reaction 2 GTP = 3',3'-c-di-GMP + 2 diphosphate. Cyclic nucleotide synthase (second messenger synthase) of a CBASS antivirus system. CBASS (cyclic oligonucleotide-based antiphage signaling system) provides immunity against bacteriophage. The CD-NTase protein synthesizes cyclic nucleotides in response to infection; these serve as specific second messenger signals. The signals activate a diverse range of effectors, leading to bacterial cell death and thus abortive phage infection. A type I-D(GG) CBASS system. Functionally, cyclic dinucleotide synthase that catalyzes the synthesis of c-di-GMP, has no activity with other NTP substrates. The chain is c-di-GMP synthase from Flavobacteriaceae sp. genome_bin_11.